The chain runs to 306 residues: D-alanine--D-alanine ligase (306 aa).

In terms of domain architecture, ATP-grasp spans 107–300 (KEAYRAAGLP…FGQLCAWMVE (194 aa)). 134–184 (MQPPYVVKPYNEGSSVGVYIVTEAANGPPVLAPDLPATLMVEEYVPGRELS) provides a ligand contact to ATP. Positions 251, 267, and 269 each coordinate Mg(2+).

It belongs to the D-alanine--D-alanine ligase family. The cofactor is Mg(2+). Mn(2+) is required as a cofactor.

The protein localises to the cytoplasm. The catalysed reaction is 2 D-alanine + ATP = D-alanyl-D-alanine + ADP + phosphate + H(+). Its pathway is cell wall biogenesis; peptidoglycan biosynthesis. In terms of biological role, cell wall formation. In Ruegeria pomeroyi (strain ATCC 700808 / DSM 15171 / DSS-3) (Silicibacter pomeroyi), this protein is D-alanine--D-alanine ligase.